Here is a 211-residue protein sequence, read N- to C-terminus: ATP-dependent Clp protease proteolytic subunit (211 aa).

The active-site Nucleophile is the Ser114. His139 is a catalytic residue.

This sequence belongs to the peptidase S14 family. Fourteen ClpP subunits assemble into 2 heptameric rings which stack back to back to give a disk-like structure with a central cavity, resembling the structure of eukaryotic proteasomes.

Its subcellular location is the cytoplasm. It carries out the reaction Hydrolysis of proteins to small peptides in the presence of ATP and magnesium. alpha-casein is the usual test substrate. In the absence of ATP, only oligopeptides shorter than five residues are hydrolyzed (such as succinyl-Leu-Tyr-|-NHMec, and Leu-Tyr-Leu-|-Tyr-Trp, in which cleavage of the -Tyr-|-Leu- and -Tyr-|-Trp bonds also occurs).. Functionally, cleaves peptides in various proteins in a process that requires ATP hydrolysis. Has a chymotrypsin-like activity. Plays a major role in the degradation of misfolded proteins. In Pseudomonas fluorescens (strain Pf0-1), this protein is ATP-dependent Clp protease proteolytic subunit.